The chain runs to 459 residues: uncharacterized protein (459 aa).

The 59-residue stretch at 9–67 folds into the TRAM domain; the sequence is KLEVGQTFPVTIKRLGINGEGVGYFKRQVVFIPGALPGEEVVAETTKIQRGFAEAKVKK. [4Fe-4S] cluster contacts are provided by Cys-80, Cys-86, Cys-89, and Cys-168. The S-adenosyl-L-methionine site is built by Gln-292, Tyr-321, Asp-342, and Asp-390. The Nucleophile role is filled by Cys-417.

Belongs to the class I-like SAM-binding methyltransferase superfamily. RNA M5U methyltransferase family.

This is an uncharacterized protein from Bacillus cereus (strain ATCC 10987 / NRS 248).